A 360-amino-acid polypeptide reads, in one-letter code: C-C chemokine receptor-like 2 (360 aa).

Residues 1 to 42 are Extracellular-facing; that stretch reads MDNYTVAPDDEYDVLILDDYLDNSGPDQVPAPEFLSPQQVLQ. N3 carries an N-linked (GlcNAc...) asparagine glycan. A helical transmembrane segment spans residues 43-63; it reads FCCAVFAVGLLDNVLAVFILV. The Cytoplasmic portion of the chain corresponds to 64-73; that stretch reads KYKGLKNLGN. The helical transmembrane segment at 74–94 threads the bilayer; that stretch reads IYFLNLALSNLCFLLPLPFWA. Residues 95–109 are Extracellular-facing; the sequence is HTAAHGESPGNGTCK. N105 carries N-linked (GlcNAc...) asparagine glycosylation. C108 and C185 are joined by a disulfide. A helical membrane pass occupies residues 110–130; that stretch reads VLVGLHSSGLYSEVFSNILLL. The Cytoplasmic segment spans residues 131–141; sequence VQGYRVFSQGR. Residues 142–162 traverse the membrane as a helical segment; it reads LASIFTTVSCGIVACILAWAM. Residues 163-202 are Extracellular-facing; the sequence is ATALSLPESVFYEPRMERQKHKCAFGKPHFLPIEAPLWKY. The helical transmembrane segment at 203–223 threads the bilayer; that stretch reads VLTSKMIILVLAFPLLVFIIC. At 224-243 the chain is on the cytoplasmic side; sequence CRQLRRRQSFRERQYDLHKP. The chain crosses the membrane as a helical span at residues 244 to 264; sequence ALVITGVFLLMWAPYNTVLFL. The Extracellular portion of the chain corresponds to 265–285; it reads SAFQEHLSLQDEKSSYHLDAS. The chain crosses the membrane as a helical span at residues 286–307; sequence VQVTQLVATTHCCVNPLLYLLL. Residues 308-360 lie on the Cytoplasmic side of the membrane; the sequence is DRKAFMRYLRSLFPRCNDIPYQSSGGYQQAPPREGHGRPIELYSNLHQRQDII.

This sequence belongs to the G-protein coupled receptor 1 family. As to expression, expressed in macrophages, astrocytes, in glial cells. Constitutively expressed by mast cells. Detected in bronchial epithelium in OVA-induced airway inflammation. Up-regulated during dendritic cell (DC) maturation.

The protein localises to the cell membrane. Receptor for CCL19 and chemerin/RARRES2. Does not appear to be a signaling receptor, but may have a role in modulating chemokine-triggered immune responses by capturing and internalizing CCL19 or by presenting RARRES2 ligand to CMKLR1, a functional signaling receptor. Plays a critical role for the development of Th2 responses. This chain is C-C chemokine receptor-like 2 (Ccrl2), found in Mus musculus (Mouse).